A 1159-amino-acid chain; its full sequence is ATP-dependent helicase/deoxyribonuclease subunit B (1159 aa).

Belongs to the helicase family. AddB/RexB type 2 subfamily. As to quaternary structure, heterodimer of AddA and RexB. Mg(2+) is required as a cofactor.

Its function is as follows. The heterodimer acts as both an ATP-dependent DNA helicase and an ATP-dependent, dual-direction single-stranded exonuclease. Recognizes the chi site generating a DNA molecule suitable for the initiation of homologous recombination. This subunit has 5' -&gt; 3' nuclease activity but not helicase activity. The protein is ATP-dependent helicase/deoxyribonuclease subunit B of Leuconostoc mesenteroides subsp. mesenteroides (strain ATCC 8293 / DSM 20343 / BCRC 11652 / CCM 1803 / JCM 6124 / NCDO 523 / NBRC 100496 / NCIMB 8023 / NCTC 12954 / NRRL B-1118 / 37Y).